Here is a 125-residue protein sequence, read N- to C-terminus: Multifunctional methyltransferase subunit TRM112-like protein (125 aa).

The TRM112 domain maps to 2-119; that stretch reads RLLTHNLLSS…SRGIPNMLLS (118 aa). Serine 119 carries the post-translational modification Phosphoserine.

This sequence belongs to the TRM112 family. In terms of assembly, part of the heterodimeric BUD23-TRM112 methyltransferase complex; this heterodimerization is necessary for the metabolic stability and activity of the catalytic subunit BUD23. Part of the heterodimeric N6AMT1-TRM112 methyltransferase complex; this heterodimerization is necessary for S-adenosyl-L-methionine-binding to N6AMT1/HEMK2. Part of the heterodimeric ALKBH8-TRM112 methyltransferase complex. Part of the heterodimeric METTL5-TRM112 methyltransferase complex; this heterodimerization is necessary for the stability of the catalytic subunit METTL5. Part of the heterodimeric THUMPD3-TRM112 methyltransferase complex; this complex forms an active tRNA methyltransferase, where TRMT112 acts as an activator of the catalytic subunit THUMPD3. Part of the heterodimeric THUMPD2-TRM112 methyltransferase complex; this complex forms an active tRNA methyltransferase, where TRMT112 acts as an activator of the catalytic subunit THUMPD2. Part of the heterodimeric TRMT11-TRM112 methyltransferase complex; this complex forms an active tRNA methyltransferase, where TRMT112 acts as an activator of the catalytic subunit TRMT11.

The protein localises to the nucleus. Its subcellular location is the nucleoplasm. It localises to the cytoplasm. The protein resides in the perinuclear region. Functionally, acts as an activator of both rRNA/tRNA and protein methyltransferases. Together with methyltransferase BUD23, methylates the N(7) position of a guanine in 18S rRNA. The heterodimer with HEMK2/N6AMT1 catalyzes N5-methylation of ETF1 on 'Gln-185', using S-adenosyl L-methionine as methyl donor. The heterodimer with ALKBH8 catalyzes the methylation of 5-carboxymethyl uridine to 5-methylcarboxymethyl uridine at the wobble position of the anticodon loop in target tRNA species. Together with methyltransferase THUMPD3, catalyzes the formation of N(2)-methylguanosine at position 6 in a broad range of tRNA substrates and at position 7 of tRNA(Trp). Involved in the pre-rRNA processing steps leading to small-subunit rRNA production. Together with methyltransferase METTL5, specifically methylates the 6th position of adenine in position 1832 of 18S rRNA. This Bos taurus (Bovine) protein is Multifunctional methyltransferase subunit TRM112-like protein (TRMT112).